The sequence spans 142 residues: Protein spalt-accessory (142 aa).

The signal sequence occupies residues 1-16; the sequence is MKLLIALFALVTAVNA. Residues 75 to 142 form a disordered region; it reads GFAGQGSPNQ…HHEHHGHHRH (68 aa). A compositionally biased stretch (basic and acidic residues) spans 107–124; that stretch reads GHFHENPHEYPEHHGDHH. Over residues 125–142 the composition is skewed to basic residues; sequence REHHEHHGHHEHHGHHRH.

It is found in the secreted. Its function is as follows. Likely to be involved in the establishment of the head. In Drosophila melanogaster (Fruit fly), this protein is Protein spalt-accessory (sala).